The following is a 601-amino-acid chain: Glutathione-regulated potassium-efflux system protein KefB (601 aa).

13 helical membrane-spanning segments follow: residues 4–24, 29–49, 55–75, 87–107, 115–135, 152–172, 177–197, 207–227, 230–250, 268–288, 291–311, 326–346, and 356–376; these read SDLLLAGVLFLFAAVIAVPLA, IGAVLGYLLAGIAIGPWGLGF, EILHFSELGVVFLMFIIGLEL, IFGVGAAQVMLSAAILGGLLM, AAVVGGIGLAMSSTAMALQLM, VLLFQDLAVIPALALVPLLAG, HVNWLTVGMKVLAFAGMLIGG, FIASSGVREVFTAATLLLVLG, LFMEALGLSMALGTFIAGVLL, GLLLGLFFISVGMALNLGVLY, LLWVAVSVAVLVAVKMLVLYL, FAGVLSQGGEFAFVLFSLPAS, and ALLLVAVTLSMMTTPLLMKGI. The 120-residue stretch at 400–519 folds into the RCK N-terminal domain; the sequence is KPQVIIVGFG…AGVTQFSRET (120 aa).

It belongs to the monovalent cation:proton antiporter 2 (CPA2) transporter (TC 2.A.37) family. KefB subfamily. In terms of assembly, interacts with the regulatory subunit KefG.

Its subcellular location is the cell inner membrane. Functionally, pore-forming subunit of a potassium efflux system that confers protection against electrophiles. Catalyzes K(+)/H(+) antiport. The chain is Glutathione-regulated potassium-efflux system protein KefB from Klebsiella pneumoniae subsp. pneumoniae (strain ATCC 700721 / MGH 78578).